The chain runs to 443 residues: Threonine/serine transporter TdcC (443 aa).

11 helical membrane-spanning segments follow: residues 22–42, 44–64, 97–117, 140–160, 163–183, 207–227, 259–279, 319–339, 366–386, 389–409, and 423–443; these read TTWT…FFPI, AGFG…PIAF, GVVI…IYGV, FVAL…KDLM, VMSY…LSLI, ILVT…FSPI, ASML…FTLS, ASII…LGTL, ISMI…PNIL, IEAM…MYAI, and DNVF…YKLF.

The protein belongs to the amino acid/polyamine transporter 2 family. SdaC/TdcC subfamily.

It is found in the cell inner membrane. The enzyme catalyses L-threonine(in) + H(+)(in) = L-threonine(out) + H(+)(out). It catalyses the reaction L-serine(in) + H(+)(in) = L-serine(out) + H(+)(out). In terms of biological role, involved in the import of threonine and serine into the cell, with the concomitant import of a proton (symport system). This Salmonella newport (strain SL254) protein is Threonine/serine transporter TdcC.